We begin with the raw amino-acid sequence, 129 residues long: ATP synthase epsilon chain (129 aa).

This sequence belongs to the ATPase epsilon chain family. F-type ATPases have 2 components, CF(1) - the catalytic core - and CF(0) - the membrane proton channel. CF(1) has five subunits: alpha(3), beta(3), gamma(1), delta(1), epsilon(1). CF(0) has three main subunits: a, b and c.

The protein resides in the cell inner membrane. In terms of biological role, produces ATP from ADP in the presence of a proton gradient across the membrane. This chain is ATP synthase epsilon chain, found in Nitratiruptor sp. (strain SB155-2).